The sequence spans 325 residues: Peroxidase 47 (325 aa).

An N-terminal signal peptide occupies residues 1–36 (MLTRFKKQNNKMVRANIVSMVLLMHAIVGFPFHARG). Cystine bridges form between Cys-46/Cys-125, Cys-79/Cys-84, Cys-131/Cys-321, and Cys-209/Cys-235. The active-site Proton acceptor is the His-77. Positions 78, 83, 85, and 87 each coordinate Ca(2+). Pro-172 lines the substrate pocket. N-linked (GlcNAc...) asparagine glycosylation is present at Asn-177. A heme b-binding site is contributed by His-202. Position 203 (Thr-203) interacts with Ca(2+). The Ca(2+) site is built by Asp-246, Thr-248, and Asp-253.

The protein belongs to the peroxidase family. Classical plant (class III) peroxidase subfamily. The cofactor is heme b. It depends on Ca(2+) as a cofactor.

The protein localises to the secreted. It catalyses the reaction 2 a phenolic donor + H2O2 = 2 a phenolic radical donor + 2 H2O. In terms of biological role, removal of H(2)O(2), oxidation of toxic reductants, biosynthesis and degradation of lignin, suberization, auxin catabolism, response to environmental stresses such as wounding, pathogen attack and oxidative stress. These functions might be dependent on each isozyme/isoform in each plant tissue. This chain is Peroxidase 47 (PER47), found in Arabidopsis thaliana (Mouse-ear cress).